We begin with the raw amino-acid sequence, 188 residues long: Elongation factor P (188 aa).

Lysine 34 bears the N6-(3,6-diaminohexanoyl)-5-hydroxylysine mark.

This sequence belongs to the elongation factor P family. In terms of processing, is beta-lysylated on the epsilon-amino group of Lys-34 by the combined action of EpmA and EpmB, and then hydroxylated on the C5 position of the same residue by EpmC. Lysylation is critical for the stimulatory effect of EF-P on peptide-bond formation. The lysylation moiety would extend toward the peptidyltransferase center and stabilize the terminal 3-CCA end of the tRNA. The hydroxylation of the C5 position on Lys-34 would allow additional potential stabilizing hydrogen-bond interactions with the P-tRNA.

The protein localises to the cytoplasm. Its pathway is protein biosynthesis; polypeptide chain elongation. Its function is as follows. Involved in peptide bond synthesis. Alleviates ribosome stalling that occurs when 3 or more consecutive Pro residues or the sequence PPG is present in a protein, possibly by augmenting the peptidyl transferase activity of the ribosome. Modification of Lys-34 is required for alleviation. The sequence is that of Elongation factor P from Shigella boydii serotype 18 (strain CDC 3083-94 / BS512).